The chain runs to 506 residues: Histidine ammonia-lyase (506 aa).

Positions 143–145 form a cross-link, 5-imidazolinone (Ala-Gly); that stretch reads ASG. 2,3-didehydroalanine (Ser) is present on serine 144.

This sequence belongs to the PAL/histidase family. Contains an active site 4-methylidene-imidazol-5-one (MIO), which is formed autocatalytically by cyclization and dehydration of residues Ala-Ser-Gly.

The protein resides in the cytoplasm. It carries out the reaction L-histidine = trans-urocanate + NH4(+). Its pathway is amino-acid degradation; L-histidine degradation into L-glutamate; N-formimidoyl-L-glutamate from L-histidine: step 1/3. This Salmonella dublin (strain CT_02021853) protein is Histidine ammonia-lyase.